A 357-amino-acid chain; its full sequence is Alanine racemase, catabolic (357 aa).

Lysine 33 functions as the Proton acceptor; specific for D-alanine in the catalytic mechanism. An N6-(pyridoxal phosphate)lysine modification is found at lysine 33. Lysine 122 is subject to N6-carboxylysine. Arginine 129 provides a ligand contact to substrate. Tyrosine 253 acts as the Proton acceptor; specific for L-alanine in catalysis. Residue methionine 301 coordinates substrate.

This sequence belongs to the alanine racemase family. Homodimer. Pyridoxal 5'-phosphate is required as a cofactor.

The enzyme catalyses L-alanine = D-alanine. Its function is as follows. Isomerizes L-alanine to D-alanine which is then oxidized to pyruvate by DadA. This Pseudomonas aeruginosa (strain ATCC 15692 / DSM 22644 / CIP 104116 / JCM 14847 / LMG 12228 / 1C / PRS 101 / PAO1) protein is Alanine racemase, catabolic.